A 130-amino-acid polypeptide reads, in one-letter code: Small ribosomal subunit protein uS9 (130 aa).

It belongs to the universal ribosomal protein uS9 family.

This is Small ribosomal subunit protein uS9 from Enterococcus faecalis (strain ATCC 700802 / V583).